An 82-amino-acid chain; its full sequence is Exodeoxyribonuclease 7 small subunit (82 aa).

This sequence belongs to the XseB family. As to quaternary structure, heterooligomer composed of large and small subunits.

It localises to the cytoplasm. It catalyses the reaction Exonucleolytic cleavage in either 5'- to 3'- or 3'- to 5'-direction to yield nucleoside 5'-phosphates.. In terms of biological role, bidirectionally degrades single-stranded DNA into large acid-insoluble oligonucleotides, which are then degraded further into small acid-soluble oligonucleotides. The polypeptide is Exodeoxyribonuclease 7 small subunit (Mycobacterium avium (strain 104)).